Here is a 190-residue protein sequence, read N- to C-terminus: Ferric nitrobindin-like protein (190 aa).

The GXWXGXG motif lies at 20–26 (GNWAGAG).

It belongs to the nitrobindin family.

The chain is Ferric nitrobindin-like protein from Streptomyces griseus subsp. griseus (strain JCM 4626 / CBS 651.72 / NBRC 13350 / KCC S-0626 / ISP 5235).